Reading from the N-terminus, the 72-residue chain is Bowman-Birk type proteinase inhibitor 2a (72 aa).

7 disulfides stabilise this stretch: cysteine 8–cysteine 61, cysteine 9–cysteine 24, cysteine 12–cysteine 57, cysteine 14–cysteine 22, cysteine 31–cysteine 38, cysteine 35–cysteine 50, and cysteine 40–cysteine 48.

As to quaternary structure, dimer.

Inhibits trypsin (IC(50)=0.9 nM) and alpha-chymotrypsin (IC(50)=1.1 nM). The sequence is that of Bowman-Birk type proteinase inhibitor 2a from Lathyrus sativus (White vetchling).